Reading from the N-terminus, the 657-residue chain is MNFHSTKPLSYDSSDNEIYNPFLVSTNEEGRVSPTIDKQQQPVLKRAKSIVSSNSLSAFFTDSKSKQQQQQQQRDRKRNKDRRNRPGRLRRSHSTNSNDQFIMNTGSFKLPDQDEFQFTMNNNSDNGFSSSTSSSDLESVPDLTDDNIDELTPETTPIKPVGNFYFNTLFDNEENTDGYYYKLNSQIKIRNELQQQQQQQQQQRLTSSSPSIFEIPEIVYKIISYVDEQNTILPQESTPIRRNPLSYKHALLIHGDKKSAQSALQKTTNQQSQQNQQPSSVISSSPLYNCLLVNKLFYKITSEIISTKFYSHNEQQLKKFIENKSHQQQNSSSPIIIQPKTFILHKLFQTKQIIFDQLIEFINFDQLSWFELYMCPKISLDKPQSQTFMKIFQSCSNNLTKLIITGSKTIDDEFLMKLGQFKCGDNLQILDLRACELITDFGIYQLSLYCRNLTFINFGRKPISNGNGNGGGNGGSGRYITDNSMIKLINNNRKLSTIGLAGCHITDKCVWEIANKLPNISRLSLNNCPKLTNSGINQIFTLTNTPNSNYFKCLSVLELRFNHQLTDLTSIIKFKRRQKFQFNIILLLELCESLMLKYRQQEFELDKLISLKIFQDISHWVNDYNDNDGDLSYNEIKHLINNNNNNNSSNNISTRGF.

2 disordered regions span residues 57-140 (SAFF…LESV) and 262-282 (SALQ…SSVI). Over residues 75–93 (DRKRNKDRRNRPGRLRRSH) the composition is skewed to basic residues. A compositionally biased stretch (polar residues) spans 94–107 (STNSNDQFIMNTGS). Composition is skewed to low complexity over residues 121–135 (NNNS…TSSS) and 270–282 (QQSQ…SSVI).

It belongs to the AMN1 family.

The protein localises to the cytoplasm. It is found in the nucleus. In terms of biological role, negative regulator of the mitotic exit network (MEN), required for multiple cell cycle checkpoints. Required for daughter cell separation and chromosome stability. Involved in copper sensitivity. This is Antagonist of mitotic exit network protein 1 (AMN1) from Candida albicans (strain SC5314 / ATCC MYA-2876) (Yeast).